The following is a 620-amino-acid chain: 1-deoxy-D-xylulose-5-phosphate synthase (620 aa).

Thiamine diphosphate contacts are provided by residues H80 and 121–123 (GHS). D152 serves as a coordination point for Mg(2+). Thiamine diphosphate-binding positions include 153 to 154 (GA), N181, Y288, and E370. Mg(2+) is bound at residue N181.

This sequence belongs to the transketolase family. DXPS subfamily. As to quaternary structure, homodimer. Mg(2+) is required as a cofactor. It depends on thiamine diphosphate as a cofactor.

It catalyses the reaction D-glyceraldehyde 3-phosphate + pyruvate + H(+) = 1-deoxy-D-xylulose 5-phosphate + CO2. The protein operates within metabolic intermediate biosynthesis; 1-deoxy-D-xylulose 5-phosphate biosynthesis; 1-deoxy-D-xylulose 5-phosphate from D-glyceraldehyde 3-phosphate and pyruvate: step 1/1. Functionally, catalyzes the acyloin condensation reaction between C atoms 2 and 3 of pyruvate and glyceraldehyde 3-phosphate to yield 1-deoxy-D-xylulose-5-phosphate (DXP). This chain is 1-deoxy-D-xylulose-5-phosphate synthase, found in Sodalis glossinidius (strain morsitans).